The following is an 81-amino-acid chain: Antitoxin VapB28 (81 aa).

Antitoxin component of a type II toxin-antitoxin (TA) system. The chain is Antitoxin VapB28 (vapB28) from Mycobacterium tuberculosis (strain CDC 1551 / Oshkosh).